The sequence spans 388 residues: Formate-dependent phosphoribosylglycinamide formyltransferase (388 aa).

N(1)-(5-phospho-beta-D-ribosyl)glycinamide contacts are provided by residues 11–12 (EL) and Glu-71. Residues Arg-103, Lys-144, 149-154 (SSGKGQ), 184-187 (EEFI), and Glu-192 contribute to the ATP site. In terms of domain architecture, ATP-grasp spans 108-300 (DLAAKELGLK…EFELHLRAVL (193 aa)). Residues Glu-257 and Glu-270 each coordinate Mg(2+). N(1)-(5-phospho-beta-D-ribosyl)glycinamide-binding positions include Asp-277, Lys-349, and 356 to 357 (RR).

This sequence belongs to the PurK/PurT family. As to quaternary structure, homodimer.

The catalysed reaction is N(1)-(5-phospho-beta-D-ribosyl)glycinamide + formate + ATP = N(2)-formyl-N(1)-(5-phospho-beta-D-ribosyl)glycinamide + ADP + phosphate + H(+). Its pathway is purine metabolism; IMP biosynthesis via de novo pathway; N(2)-formyl-N(1)-(5-phospho-D-ribosyl)glycinamide from N(1)-(5-phospho-D-ribosyl)glycinamide (formate route): step 1/1. In terms of biological role, involved in the de novo purine biosynthesis. Catalyzes the transfer of formate to 5-phospho-ribosyl-glycinamide (GAR), producing 5-phospho-ribosyl-N-formylglycinamide (FGAR). Formate is provided by PurU via hydrolysis of 10-formyl-tetrahydrofolate. In Bacteroides thetaiotaomicron (strain ATCC 29148 / DSM 2079 / JCM 5827 / CCUG 10774 / NCTC 10582 / VPI-5482 / E50), this protein is Formate-dependent phosphoribosylglycinamide formyltransferase.